Here is a 570-residue protein sequence, read N- to C-terminus: Urease subunit alpha (570 aa).

The 440-residue stretch at 131–570 (GGFDSHIHFI…LPMAQRYFMY (440 aa)) folds into the Urease domain. The Ni(2+) site is built by His136, His138, and Lys219. The residue at position 219 (Lys219) is an N6-carboxylysine. Substrate is bound at residue His221. His248 and His274 together coordinate Ni(2+). Residue His322 is the Proton donor of the active site. Residue Asp362 coordinates Ni(2+).

It belongs to the metallo-dependent hydrolases superfamily. Urease alpha subunit family. As to quaternary structure, heterotrimer of UreA (gamma), UreB (beta) and UreC (alpha) subunits. Three heterotrimers associate to form the active enzyme. Ni cation is required as a cofactor. In terms of processing, carboxylation allows a single lysine to coordinate two nickel ions.

Its subcellular location is the cytoplasm. The catalysed reaction is urea + 2 H2O + H(+) = hydrogencarbonate + 2 NH4(+). It participates in nitrogen metabolism; urea degradation; CO(2) and NH(3) from urea (urease route): step 1/1. The polypeptide is Urease subunit alpha (Rhodopseudomonas palustris (strain BisB18)).